The primary structure comprises 592 residues: Probable translation initiation factor IF-2 (592 aa).

The tr-type G domain maps to 5–226; it reads IRSPFVVVMG…AGVSQRFIPR (222 aa). The segment at 14–21 is G1; sequence GHVDVGKT. Residue 14-21 participates in GTP binding; sequence GHVDVGKT. The interval 39-43 is G2; sequence MITQH. The interval 80 to 83 is G3; it reads DTPG. Residues 80 to 84 and 134 to 137 contribute to the GTP site; these read DTPGH and NKLD. The tract at residues 134–137 is G4; it reads NKLD. A G5 region spans residues 202–204; sequence SAV.

The protein belongs to the TRAFAC class translation factor GTPase superfamily. Classic translation factor GTPase family. IF-2 subfamily.

In terms of biological role, function in general translation initiation by promoting the binding of the formylmethionine-tRNA to ribosomes. Seems to function along with eIF-2. In Pyrobaculum calidifontis (strain DSM 21063 / JCM 11548 / VA1), this protein is Probable translation initiation factor IF-2.